A 335-amino-acid polypeptide reads, in one-letter code: Deoxyhypusine hydroxylase (335 aa).

5 HEAT-like PBS-type repeats span residues 71-97 (LKHE…VVKD), 104-130 (CRHE…LRDN), 200-233 (QRYR…GLKD), 238-264 (FRHE…ALSD), and 271-298 (VRHE…FLND). 4 residues coordinate Fe cation: histidine 73, glutamate 74, histidine 106, and glutamate 107. Fe cation contacts are provided by histidine 240, glutamate 241, histidine 273, and glutamate 274.

It belongs to the deoxyhypusine hydroxylase family. It depends on Fe(2+) as a cofactor.

It localises to the cytoplasm. Its subcellular location is the nucleus. It catalyses the reaction [eIF5A protein]-deoxyhypusine + AH2 + O2 = [eIF5A protein]-hypusine + A + H2O. The protein operates within protein modification; eIF5A hypusination. In terms of biological role, catalyzes the hydroxylation of the N(6)-(4-aminobutyl)-L-lysine intermediate to form hypusine, an essential post-translational modification only found in mature eIF-5A factor. The polypeptide is Deoxyhypusine hydroxylase (lia1) (Aspergillus clavatus (strain ATCC 1007 / CBS 513.65 / DSM 816 / NCTC 3887 / NRRL 1 / QM 1276 / 107)).